A 734-amino-acid chain; its full sequence is Probable carboxypeptidase X1 (734 aa).

The signal sequence occupies residues 1 to 20; it reads MWGLLLALAAFAPAVGPALG. Residues 30–62 form a disordered region; sequence AQPGTTKVPGSTPALHSSPAQPPAETANGTSEQ. The segment covering 32–48 has biased composition (polar residues); it reads PGTTKVPGSTPALHSSP. N-linked (GlcNAc...) asparagine glycosylation is found at Asn-57, Asn-210, Asn-220, and Asn-318. The F5/8 type C domain occupies 113 to 274; the sequence is TGCPPLGLES…PCLRAEILAC (162 aa). Cysteines 115 and 274 form a disulfide. The region spanning 298–621 is the Peptidase M14 domain; that stretch reads QHHNYKAMRK…DALLTYLEQV (324 aa). The Zn(2+) site is built by His-360 and Glu-363. Asn-428 and Asn-472 each carry an N-linked (GlcNAc...) asparagine glycan. His-498 serves as a coordination point for Zn(2+). The Proton donor/acceptor role is filled by Glu-591.

The protein belongs to the peptidase M14 family. Requires Zn(2+) as cofactor.

The protein localises to the secreted. In terms of biological role, may be involved in cell-cell interactions. No carboxypeptidase activity was found yet. The protein is Probable carboxypeptidase X1 (CPXM1) of Homo sapiens (Human).